An 825-amino-acid chain; its full sequence is Glycerol-3-phosphate acyltransferase (825 aa).

An HXXXXD motif motif is present at residues 306–311 (CHRSHM). The segment at 802–825 (SASSSTEMEASTSSSQTAEETTQG) is disordered.

The protein belongs to the GPAT/DAPAT family.

It is found in the cell inner membrane. The enzyme catalyses sn-glycerol 3-phosphate + an acyl-CoA = a 1-acyl-sn-glycero-3-phosphate + CoA. Its pathway is phospholipid metabolism; CDP-diacylglycerol biosynthesis; CDP-diacylglycerol from sn-glycerol 3-phosphate: step 1/3. In Pectobacterium atrosepticum (strain SCRI 1043 / ATCC BAA-672) (Erwinia carotovora subsp. atroseptica), this protein is Glycerol-3-phosphate acyltransferase.